Consider the following 176-residue polypeptide: Ferritin, liver middle subunit (176 aa).

The 150-residue stretch at 7–156 (QNYHRDCEAA…DFITNLSRMD (150 aa)) folds into the Ferritin-like diiron domain. Positions 24, 59, 62, 104, and 138 each coordinate Fe cation.

The protein belongs to the ferritin family. In terms of assembly, in liver, forms a heteromer consisting of middle and heavy subunits. The functional molecule forms a roughly spherical shell with a diameter of 12 nm and contains a central cavity into which the insoluble mineral iron core is deposited. As to expression, liver (at protein level).

It carries out the reaction 4 Fe(2+) + O2 + 4 H(+) = 4 Fe(3+) + 2 H2O. In terms of biological role, stores iron in a soluble, non-toxic, readily available form. Important for iron homeostasis. Has ferroxidase activity. Iron is taken up in the ferrous form and deposited as ferric hydroxides after oxidation. In Trematomus bernacchii (Emerald rockcod), this protein is Ferritin, liver middle subunit.